The sequence spans 316 residues: HASARGEGFLLLKADCNKGYVTVKQIGVNPTSVDLVDVGKDEEVKMRPGQVLHIVNKLYPFVVQFGEESEESVMEAEEKIQTEKRPCEDSCENDDIENVPKKAKKMEVVDTQSSSADLRPSKSSVSPHEGTTSRKEHLGHWSQGLKSSMQDPKVQVYKDEKTVVIKDKYPKARYHWLVLPWDSISSLKSVTREHLGLLEHMHAVGQKMIQQCPAKESLEFRLGYHAIPSMSQLHLHVISQDFDSPALKTKKHWNSFTTEYFLNSEEVIEMVRSKGKVTVNDQASELLKLPLRCHLCKQQLSTIPQLKEHLKKHWTK.

Positions 1–38 (HASARGEGFLLLKADCNKGYVTVKQIGVNPTSVDLVDV) constitute an FHA-like domain. Residues 104-142 (KKMEVVDTQSSSADLRPSKSSVSPHEGTTSRKEHLGHWS) are disordered. Residues 110–130 (DTQSSSADLRPSKSSVSPHEG) show a composition bias toward polar residues. The region spanning 142-247 (SQGLKSSMQD…ISQDFDSPAL (106 aa)) is the HIT domain. 2 interaction with DNA substrate regions span residues 167–171 (DKYPK) and 229–230 (SM). Positions 232-236 (QLHLH) match the Histidine triad motif motif. His234 serves as the catalytic Tele-AMP-histidine intermediate. The C2H2-type zinc finger occupies 291 to 313 (LRCHLCKQQLSTIPQLKEHLKKH).

Its subcellular location is the nucleus. It is found in the nucleoplasm. It localises to the nucleolus. The catalysed reaction is a 5'-end adenosine-5'-diphospho-5'-2'-deoxyribonucleoside-DNA + H2O = a 5'-end 5'-phospho-2'-deoxyribonucleoside-DNA + AMP + 2 H(+). It catalyses the reaction a 5'-end adenosine-5'-diphospho-5'-ribonucleoside-2'-deoxyribonucleotide-DNA + H2O = a 5'-end 5'-phospho-ribonucleoside-2'-deoxyribonucleotide-DNA + AMP + 2 H(+). The enzyme catalyses a 3'-end 2'-deoxyribonucleotide-3'-diphospho-5'-guanosine-DNA + H2O = a 3'-end 2'-deoxyribonucleotide 3'-phosphate-DNA + GMP + 2 H(+). In terms of biological role, DNA-binding protein involved in single-strand DNA break repair, double-strand DNA break repair and base excision repair. Resolves abortive DNA ligation intermediates formed either at base excision sites, or when DNA ligases attempt to repair non-ligatable breaks induced by reactive oxygen species. Catalyzes the release of adenylate groups covalently linked to 5'-phosphate termini, resulting in the production of 5'-phosphate termini that can be efficiently rejoined. Also able to hydrolyze adenosine 5'-monophosphoramidate (AMP-NH(2)) and diadenosine tetraphosphate (AppppA), but with lower catalytic activity. Likewise, catalyzes the release of 3'-linked guanosine (DNAppG) and inosine (DNAppI) from DNA, but has higher specific activity with 5'-linked adenosine (AppDNA). The protein is Aprataxin (APTX) of Gallus gallus (Chicken).